Reading from the N-terminus, the 342-residue chain is Deoxyhypusine synthase regulatory subunit (342 aa).

NAD(+)-binding positions include 72–76 (SNLIS), 98–100 (TAG), glutamate 104, aspartate 213, 282–283 (TG), and 316–317 (DA).

The protein belongs to the deoxyhypusine synthase family. As to quaternary structure, heterotetramer formed by a homodimer of the non-catalytic regulatory subunit DHSp and a homodimer of the catalytic subunit DHSc where DHSc appears to bind spermidine and DHSp appears to bind NAD(+).

Its pathway is protein modification; eIF5A hypusination. Functionally, required for the activation and stability of deoxyhypusine synthase DHSc. Required for cell growth and survival. The polypeptide is Deoxyhypusine synthase regulatory subunit (Trypanosoma brucei brucei (strain 927/4 GUTat10.1)).